Reading from the N-terminus, the 201-residue chain is Transcriptional regulator GfcR (201 aa).

Belongs to the purine/pyrimidine phosphoribosyltransferase family. GfcR subfamily.

In Methanobrevibacter smithii (strain ATCC 35061 / DSM 861 / OCM 144 / PS), this protein is Transcriptional regulator GfcR.